We begin with the raw amino-acid sequence, 549 residues long: Cation/acetate symporter ActP (549 aa).

The next 13 helical transmembrane spans lie at 33 to 53 (WQAI…TYWA), 77 to 97 (LAIA…ALVF), 103 to 123 (GLIY…LIAE), 148 to 168 (ILSA…QMVG), 183 to 203 (IAVV…GMLA), 206 to 226 (WVQI…AFMV), 262 to 282 (ISAL…PHIL), 303 to 323 (GFMG…IMLV), 355 to 375 (LFLG…VAGL), 404 to 424 (VSKI…ILFE), 428 to 448 (IAFM…PIIL), 464 to 484 (GGWL…TIWV), and 493 to 513 (IFPY…GIWF).

Belongs to the sodium:solute symporter (SSF) (TC 2.A.21) family.

It is found in the cell inner membrane. Transports acetate. The sequence is that of Cation/acetate symporter ActP from Salmonella newport (strain SL254).